The chain runs to 398 residues: Cytochrome b (398 aa).

The next 4 membrane-spanning stretches (helical) occupy residues 38–58, 82–104, 119–139, and 185–205; these read FGPL…FLAM, WFLR…FHMF, VRCS…IGYV, and FFSL…LHLG. Histidine 88 and histidine 102 together coordinate heme b. Heme b contacts are provided by histidine 189 and histidine 203. Histidine 208 contacts a ubiquinone. 4 helical membrane passes run 231–251, 295–316, 328–348, and 355–374; these read YYVK…IFIF, AGGV…FLNQ, IYHI…WIGC, and FVTI…AIMP.

Belongs to the cytochrome b family. As to quaternary structure, the main subunits of complex b-c1 are: cytochrome b, cytochrome c1 and the Rieske protein. Heme b is required as a cofactor.

The protein localises to the mitochondrion inner membrane. In terms of biological role, component of the ubiquinol-cytochrome c reductase complex (complex III or cytochrome b-c1 complex) that is part of the mitochondrial respiratory chain. The b-c1 complex mediates electron transfer from ubiquinol to cytochrome c. Contributes to the generation of a proton gradient across the mitochondrial membrane that is then used for ATP synthesis. The sequence is that of Cytochrome b (MT-CYB) from Daucus carota (Wild carrot).